We begin with the raw amino-acid sequence, 230 residues long: Acetyltransferase (230 aa).

Residues 143–230 (RYLDGKVICD…RVAVYKARQT (88 aa)) form the N-acetyltransferase domain.

Its pathway is mycotoxin biosynthesis. Functionally, acetyltransferase; part of the satratoxin SC3 cluster involved in the biosynthesis of satratoxins, trichothecene mycotoxins that are associated with human food poisonings. Satratoxins are suggested to be made by products of multiple gene clusters (SC1, SC2 and SC3) that encode 21 proteins in all, including polyketide synthases, acetyltransferases, and other enzymes expected to modify the trichothecene skeleton. SC1 encodes 10 proteins, SAT1 to SAT10. The largest are SAT8, which encodes a putative polyketide synthase (PKS) with a conventional non-reducing architecture, and SAT10, a putative protein containing four ankyrin repeats and thus may be involved in protein scaffolding. The putative short-chain reductase SAT3 may assist the PKS in some capacity. SAT6 contains a secretory lipase domain and acts probably as a trichothecene esterase. SAT5 encodes a putative acetyltransferase, and so, with SAT6, may affect endogenous protection from toxicity. The probable transcription factor SAT9 may regulate the expression of the SC1 cluster. SC2 encodes proteins SAT11 to SAT16, the largest of which encodes the putative reducing PKS SAT13. SAT11 is a cytochrome P450 monooxygenase, while SAT14 and SAT16 are probable acetyltransferases. The SC2 cluster may be regulated by the transcription factor SAT15. SC3 is a small cluster that encodes 5 proteins, SAT17 to SAT21. SAT21 is a putative MFS-type transporter which may have a role in exporting secondary metabolites. The four other proteins putatively encoded in SC3 include the taurine hydroxylase-like protein SAT17, the O-methyltransferase SAT18, the acetyltransferase SAT19, and the Cys6-type zinc finger SAT20, the latter being probably involved in regulation of SC3 expression. The sequence is that of Acetyltransferase from Stachybotrys chartarum (strain CBS 109288 / IBT 7711) (Toxic black mold).